A 214-amino-acid polypeptide reads, in one-letter code: Metalloproteinase inhibitor 3 (214 aa).

A signal peptide spans 1–26 (MSVCALTLILGCFLLFLGDISKPAEG). Residue cysteine 27 participates in Zn(2+) binding. 2 involved in metalloproteinase-binding regions span residues 27–30 (CTCA) and 91–92 (ES). Cystine bridges form between cysteine 27/cysteine 94, cysteine 29/cysteine 121, cysteine 39/cysteine 146, cysteine 148/cysteine 195, cysteine 153/cysteine 158, and cysteine 166/cysteine 187. In terms of domain architecture, NTR spans 27–146 (CTCAPSHPQD…GLNHRYPLGC (120 aa)).

Belongs to the protease inhibitor I35 (TIMP) family.

Its subcellular location is the secreted. It is found in the extracellular space. The protein resides in the extracellular matrix. Functionally, complexes with metalloproteinases (such as collagenases) and irreversibly inactivates them by binding to their catalytic zinc cofactor. May form part of a tissue-specific acute response to remodeling stimuli. The chain is Metalloproteinase inhibitor 3 (timp3) from Xenopus laevis (African clawed frog).